The following is a 92-amino-acid chain: Conotoxin Im9.4 (92 aa).

Positions 1–20 (MHRSLAGSAVLMLLLLFALG) are cleaved as a signal peptide. Positions 21–62 (NFVGVQPGLVTRDADNGQLMDNRRNLRLERKTMSLFKSLDKR) are excised as a propeptide. Disulfide bonds link C65–C79, C69–C81, and C75–C87. N90 carries the post-translational modification Asparagine amide.

Belongs to the conotoxin P superfamily. Expressed by the venom duct.

It is found in the secreted. Functionally, probable neurotoxin that inhibits ion channels. This is Conotoxin Im9.4 from Conus imperialis (Imperial cone).